A 633-amino-acid polypeptide reads, in one-letter code: RpoH suppressor (633 aa).

The PNPLA domain occupies 11–410 (LVMKGGITSG…SSNFPIHLFD (400 aa)). Helical transmembrane passes span 38 to 58 (NIGGTSAGAIAAAACAAAAVG), 133 to 153 (IAPVETLLLLAALAGLAYAVG), and 159 to 179 (IAAALPAAICAYLGGVVFAVL). The short motif at 41–45 (GTSAG) is the GXSXG element. The active-site Nucleophile is the S43. Residues 342–380 (ARRESLPGSDGENEAEDTTSDEDEQKTVLDSTEALTTGG) are disordered. Acidic residues predominate over residues 352 to 365 (GENEAEDTTSDEDE). D397 serves as the catalytic Proton acceptor. Residues 397–399 (DGG) carry the DGA/G motif. Positions 605-624 (EGEKWSGEGPDLTKTAPRPL) are disordered.

The protein resides in the cell membrane. Functionally, this protein is non-essential for R.meliloti growth, but induces a heat-shock response in temperature-sensitive E.coli K165 by elevating levels of sigma 32 (mechanism unknown). The chain is RpoH suppressor (suhR) from Rhizobium meliloti (strain 1021) (Ensifer meliloti).